Here is a 486-residue protein sequence, read N- to C-terminus: Ribulose bisphosphate carboxylase large chain 1 (486 aa).

Positions 125 and 175 each coordinate substrate. Residue K177 is the Proton acceptor of the active site. K179 lines the substrate pocket. Positions 203, 205, and 206 each coordinate Mg(2+). K203 is modified (N6-carboxylysine). The active-site Proton acceptor is the H295. The substrate site is built by R296, H328, and S380.

It belongs to the RuBisCO large chain family. Type I subfamily. Heterohexadecamer of 8 large chains and 8 small chains. Requires Mg(2+) as cofactor.

The enzyme catalyses 2 (2R)-3-phosphoglycerate + 2 H(+) = D-ribulose 1,5-bisphosphate + CO2 + H2O. It carries out the reaction D-ribulose 1,5-bisphosphate + O2 = 2-phosphoglycolate + (2R)-3-phosphoglycerate + 2 H(+). RuBisCO catalyzes two reactions: the carboxylation of D-ribulose 1,5-bisphosphate, the primary event in carbon dioxide fixation, as well as the oxidative fragmentation of the pentose substrate. Both reactions occur simultaneously and in competition at the same active site. The sequence is that of Ribulose bisphosphate carboxylase large chain 1 from Cereibacter sphaeroides (strain ATCC 17025 / ATH 2.4.3) (Rhodobacter sphaeroides).